Here is a 969-residue protein sequence, read N- to C-terminus: Protein translocase subunit SecA (969 aa).

Residues Q99, 117–121, and D631 each bind ATP; that span reads GEGKT.

This sequence belongs to the SecA family. Monomer and homodimer. Part of the essential Sec protein translocation apparatus which comprises SecA, SecYEG and auxiliary proteins SecDF. Other proteins may also be involved.

The protein localises to the cell inner membrane. It localises to the cytoplasm. The catalysed reaction is ATP + H2O + cellular proteinSide 1 = ADP + phosphate + cellular proteinSide 2.. Its function is as follows. Part of the Sec protein translocase complex. Interacts with the SecYEG preprotein conducting channel. Has a central role in coupling the hydrolysis of ATP to the transfer of proteins into and across the cell membrane, serving as an ATP-driven molecular motor driving the stepwise translocation of polypeptide chains across the membrane. This is Protein translocase subunit SecA from Chlamydia trachomatis serovar D (strain ATCC VR-885 / DSM 19411 / UW-3/Cx).